Consider the following 209-residue polypeptide: ATP-dependent Clp protease proteolytic subunit (209 aa).

S106 serves as the catalytic Nucleophile. H131 is an active-site residue.

The protein belongs to the peptidase S14 family. As to quaternary structure, fourteen ClpP subunits assemble into 2 heptameric rings which stack back to back to give a disk-like structure with a central cavity, resembling the structure of eukaryotic proteasomes.

It localises to the cytoplasm. The enzyme catalyses Hydrolysis of proteins to small peptides in the presence of ATP and magnesium. alpha-casein is the usual test substrate. In the absence of ATP, only oligopeptides shorter than five residues are hydrolyzed (such as succinyl-Leu-Tyr-|-NHMec, and Leu-Tyr-Leu-|-Tyr-Trp, in which cleavage of the -Tyr-|-Leu- and -Tyr-|-Trp bonds also occurs).. In terms of biological role, cleaves peptides in various proteins in a process that requires ATP hydrolysis. Has a chymotrypsin-like activity. Plays a major role in the degradation of misfolded proteins. In Brucella melitensis biotype 2 (strain ATCC 23457), this protein is ATP-dependent Clp protease proteolytic subunit.